Reading from the N-terminus, the 437-residue chain is MSSLIPISTYNLALQPFNPVQAIDDEYPVTIRLTLAAVDPEAVDDKAEPSTLRLLKRSNLFVDDEDLDDDLLDIEAEEADELDSEEEEEEVKPKNKKKQNKKKVEEEEEDEDEEDLDIDGSSDEEDDEDVSEFVVCTLSPKVQFQQTIDLTITPDEEVYFVVTGSYPVHLTGNYVEHPADEDSEDEYDEDSEDDYNLTPDEDEIIGGEEYDLDDLEDASDIENKIEELVEEEAQGSKKRNAEEPEAPTSKKSKKAKKEDKKSVQFTKDLEQGPTGSTLVEEKTEKKGKKEKAKKEEPKKEEPKKEQPKKEQPKKEQPKKEEASKKFPTKTLLGGVVTEDRKTGKGQTAKSGNKVGIRYIGKLKNGKVFDKNTSGKPFVFGLGKGECIKGFDLGVAGMAVGGERRVVIPPKMGYGSQALPGLPANSELTFDIKLVSIK.

3 stretches are compositionally biased toward acidic residues: residues 73–90, 106–131, and 179–220; these read DIEA…EEEE, EEEE…EDVS, and ADED…DASD. Disordered regions lie at residues 73 to 132 and 169 to 349; these read DIEA…DVSE and HLTG…QTAK. Composition is skewed to basic and acidic residues over residues 256 to 270 and 292 to 324; these read KKED…KDLE and AKKE…EASK. Residues 351–437 enclose the PPIase FKBP-type domain; that stretch reads GNKVGIRYIG…TFDIKLVSIK (87 aa).

This sequence belongs to the FKBP-type PPIase family. FKBP3/4 subfamily.

It localises to the nucleus. The protein resides in the nucleolus. The enzyme catalyses [protein]-peptidylproline (omega=180) = [protein]-peptidylproline (omega=0). With respect to regulation, inhibited by both FK506 and rapamycin. Functionally, PPIases accelerate the folding of proteins. It catalyzes the cis-trans isomerization of proline imidic peptide bonds in oligopeptides. The polypeptide is FK506-binding protein 3 (FPR3) (Debaryomyces hansenii (strain ATCC 36239 / CBS 767 / BCRC 21394 / JCM 1990 / NBRC 0083 / IGC 2968) (Yeast)).